The sequence spans 206 residues: Protein PH0010 (206 aa).

Positions 8–202 constitute an AMMECR1 domain; sequence EWGEFLVRLA…EEYPRGPIKR (195 aa).

The polypeptide is Protein PH0010 (Pyrococcus horikoshii (strain ATCC 700860 / DSM 12428 / JCM 9974 / NBRC 100139 / OT-3)).